A 350-amino-acid polypeptide reads, in one-letter code: Eukaryotic translation initiation factor 3 subunit I (350 aa).

WD repeat units follow at residues 8-49 (GHER…GTLE), 51-89 (HQGVIWSIDVDPETHLCATGGGDLAIKLWKVENGQCVYT), 91-135 (DSPS…ATLS), 149-188 (SEGSKATVAGWSGDGDYIIVGHDNGYVSKYDSKTGKLVTS), 198-240 (EKNV…KVYK), and 296-335 (GHFGPLNTVAVHPDGTGYSSGGEDGFIRVHTFDKSYQDFL).

Belongs to the eIF-3 subunit I family. Component of the eukaryotic translation initiation factor 3 (eIF-3) complex.

It is found in the cytoplasm. Its function is as follows. Component of the eukaryotic translation initiation factor 3 (eIF-3) complex, which is involved in protein synthesis of a specialized repertoire of mRNAs and, together with other initiation factors, stimulates binding of mRNA and methionyl-tRNAi to the 40S ribosome. The eIF-3 complex specifically targets and initiates translation of a subset of mRNAs involved in cell proliferation. In Candida albicans (strain SC5314 / ATCC MYA-2876) (Yeast), this protein is Eukaryotic translation initiation factor 3 subunit I.